Here is a 327-residue protein sequence, read N- to C-terminus: Zinc finger protein 444 (327 aa).

Position 1 is an N-acetylmethionine (Met1). A Glycyl lysine isopeptide (Lys-Gly) (interchain with G-Cter in SUMO2) cross-link involves residue Lys8. Phosphoserine is present on residues Ser18 and Ser104. One can recognise an SCAN box domain in the interval 20–104; it reads WHRFRRFHLG…LEELWGPAAS (85 aa). Positions 101-171 are disordered; the sequence is PAASPDGSSA…SPPLAPGLPA (71 aa). Residues 106-118 show a composition bias toward polar residues; sequence DGSSATRVPQDVT. Residues 134–148 show a composition bias toward low complexity; it reads PLAGTAPGAEGPAPG. C2H2-type zinc fingers lie at residues 179-201 and 207-229; these read TSCP…RQSH and HACP…RDTH. Lys190 is covalently cross-linked (Glycyl lysine isopeptide (Lys-Gly) (interchain with G-Cter in SUMO2)). The segment at 220–243 is disordered; sequence EHLRRHRDTHPGSPGSPGPALRPL. At Ser235 the chain carries Phosphoserine. 2 C2H2-type zinc fingers span residues 250–272 and 278–300; these read HACC…RKTH and FACW…QRIH. Positions 305–314 are enriched in low complexity; sequence ASAQGAVAPG. The interval 305–327 is disordered; the sequence is ASAQGAVAPGPDGGGPFPPWPLG.

It belongs to the krueppel C2H2-type zinc-finger protein family.

It is found in the nucleus. Its function is as follows. Transcriptional regulator. Binds to the 5'-flanking critical region of the SCARF1 promoter. The polypeptide is Zinc finger protein 444 (ZNF444) (Homo sapiens (Human)).